The chain runs to 247 residues: uncharacterized protein (247 aa).

It localises to the mitochondrion. This is an uncharacterized protein from Schizosaccharomyces pombe (strain 972 / ATCC 24843) (Fission yeast).